A 473-amino-acid polypeptide reads, in one-letter code: mRNA export factor ICP27 homolog (473 aa).

Disordered stretches follow at residues 57 to 81 (QELL…NSIY) and 123 to 143 (QTKR…NFPM). Residues cysteine 362, histidine 438, cysteine 442, and cysteine 447 each coordinate Zn(2+). The CHC2-type zinc-finger motif lies at 362–447 (CKYGTEKRSM…HTRRCSDPAC (86 aa)).

The protein belongs to the HHV-1 ICP27 protein family. Associates in a complex with RNA, and host export factors NXF1/TAP and ALYREF; these interactions allow nuclear export of viral transcripts.

The protein localises to the host cytoplasm. It localises to the host nucleus. Multifunctional regulator of the expression of viral genes that mediates nuclear export of viral intronless mRNAs. This immediate early (EI) protein promotes the nuclear export of viral intronless mRNAs by interacting with mRNAs and host NXF1/TAP. The polypeptide is mRNA export factor ICP27 homolog (Gallus gallus (Chicken)).